The sequence spans 266 residues: Acetyl esterase (266 aa).

In Caldicellulosiruptor saccharolyticus (Caldocellum saccharolyticum), this protein is Acetyl esterase (xynC).